A 392-amino-acid polypeptide reads, in one-letter code: Serpin B11 (392 aa).

Residues glutamate 341–phenylalanine 365 form an RCL region.

Belongs to the serpin family. Ov-serpin subfamily. In terms of tissue distribution, detected in a restricted number of tissues, including lung, placenta, prostate, and tonsil.

The protein resides in the cytoplasm. Has no serine protease inhibitory activity, probably due to variants in the scaffold impairing conformational change. The polypeptide is Serpin B11 (SERPINB11) (Homo sapiens (Human)).